We begin with the raw amino-acid sequence, 387 residues long: MDHQNYQYQNPFERRPILKSKAPAVKWIKEWVPQDIVATGGKCHLHKWVTEDTFSRLKEKEKEPDVPEPEPEPTTEILFLCSYDGCGKTFFDVSALRKHSHIHGERQYVCDQEGCGKKFLDSSKLKRHYLIHTGERNYICTYEGCGKAFSLDFNLRSHMKTHSQENYHICPYSGCVKRYAHEYKLKNHVAAYHEKNGGGETPKYTPPAEKVLRTVKTPATVCGPSSDRPYACPYEGCEKAYIHEYKLKLHLKREHPGHLQEENADTPTLNKHNGNDRNEIDDGSDQDVYRKHASNGKGQTHKQQSRAKPNMRTPPAKVGKKGSTSSPAKARIAKKPWQAKETFEEVEREEEEDSEETEEDRDNVEDGWRFGENNEDDDDDEETEYED.

5 consecutive C2H2-type zinc fingers follow at residues 79-103 (FLCSYDGCGKTFFDVSALRKHSHIH), 108-132 (YVCDQEGCGKKFLDSSKLKRHYLIH), 138-162 (YICTYEGCGKAFSLDFNLRSHMKTH), 168-193 (HICPYSGCVKRYAHEYKLKNHVAAYH), and 230-255 (YACPYEGCEKAYIHEYKLKLHLKREH). Residues 201-290 (TPKYTPPAEK…DDGSDQDVYR (90 aa)) form an MED18-binding region. The segment at 258-387 (HLQEENADTP…DDDEETEYED (130 aa)) is disordered. Serine 284 carries the phosphoserine modification. The segment covering 291–305 (KHASNGKGQTHKQQS) has biased composition (basic residues). Residues 319-326 (GKKGSTSS) carry the Nuclear localization signal motif. Residues 339-367 (AKETFEEVEREEEEDSEETEEDRDNVEDG) are a coiled coil. Composition is skewed to acidic residues over residues 344-363 (EEVEREEEEDSEETEEDRDN) and 373-387 (NNEDDDDDEETEYED).

In terms of assembly, interacts with MED18 to suppress disease susceptibility via the repression of genes glutaredoxins GRX480, GRXS13 and thioredoxin TRX-h5. As to expression, mostly expressed in flowers, to a lower extent in seedlings, stems and leaves, and, at low levels, in roots and senescent leaves.

It is found in the nucleus. Its function is as follows. Dual-function transcription factor with both repression and activation activities. Binds to 5'-CCATATT-3' motif in target gene promoters (e.g. ABR1). Also binds to G-rich DNA motif 5'-GGGGGCAGTGG-3'. Regulates the expression of genes involved in diverse cellular pathways, including glucose metabolism, photosynthesis, phototropism and stress response (e.g. salt, drought and osmotic stress). Regulates plant immunity, especially during necrotrophic fungal infection (e.g. B.cinerea). Binds to ABR1 promoter and promotes its expression, thus negatively regulating the abscisic acid (ABA) signaling pathway. Represses ABA- and salt-responsive genes expression. In Arabidopsis thaliana (Mouse-ear cress), this protein is Zinc finger transcription factor YY1.